The primary structure comprises 258 residues: F-box/LRR-repeat protein 25 (258 aa).

Residues 27 to 76 (SDSISNLPDEILHHILSFIPETNLVIRTSVLSKRWRHVWSKTPHLSFEWL) form the F-box domain. 4 LRR repeats span residues 101–130 (CTSY…SLAF), 136–161 (CNKF…SLTP), 177–202 (RCNL…SLKF), and 224–249 (RRSC…RLRD).

The chain is F-box/LRR-repeat protein 25 (FBL25) from Arabidopsis thaliana (Mouse-ear cress).